The following is a 537-amino-acid chain: MISESVVDLSRLQFAMTALYHFLFVPLTLGMTFLLAIMESVYVMTGKQVYKDMVKFWGKLFGINFALGVTTGITMEFQFGTNWAYYSHYVGDIFGAPLAIEGLTAFFLESTFIGMFFFGWDRLSKIQHLAVTWLVALGSNLSALWILVANGWMQHPVGAEFNFETMRMELVDFGALLLNPVAQVKFVHTVASGYVTGAVFVLAISSYYLLKKRDLGFARRSFAIASAFGMASILSVIVLGDESGYEVGEVQKAKLAAIEAEWETHPAPASFTLIGFPNEEEQRTDFAVKIPWVLGIIATRSLDEQVIGIKDLIADHEARIRNGMVRYGLLEELRAGNKSPEKIAAFNEVKDDLGYGLLLKKYTPNVVDASEEQIKQAAKDTIPSVASMFWSFRAMVGAGFAMLILFVCAFWASARKNEESKPWLLKFALYSLPLPWIATQTGWFVAEHGRQPWTIGGVLPTHLSASSLSTGDLWGSLIALIAFYTLLLVVEMYLMIRFARLGPSSLHTGRYHFEQLEQHAVKHASPSQADPQQPVNA.

Residues 1 to 24 (MISESVVDLSRLQFAMTALYHFLF) lie on the Cytoplasmic side of the membrane. A heme b-binding site is contributed by histidine 21. A helical transmembrane segment spans residues 25–44 (VPLTLGMTFLLAIMESVYVM). The Periplasmic segment spans residues 45-96 (TGKQVYKDMVKFWGKLFGINFALGVTTGITMEFQFGTNWAYYSHYVGDIFGA). A helical transmembrane segment spans residues 97–116 (PLAIEGLTAFFLESTFIGMF). The Cytoplasmic segment spans residues 117 to 131 (FFGWDRLSKIQHLAV). The chain crosses the membrane as a helical span at residues 132-151 (TWLVALGSNLSALWILVANG). Topologically, residues 152–189 (WMQHPVGAEFNFETMRMELVDFGALLLNPVAQVKFVHT) are periplasmic. Position 188 (histidine 188) interacts with heme b. The chain crosses the membrane as a helical span at residues 190-209 (VASGYVTGAVFVLAISSYYL). At 210–221 (LKKRDLGFARRS) the chain is on the cytoplasmic side. The chain crosses the membrane as a helical span at residues 222 to 241 (FAIASAFGMASILSVIVLGD). Residues 242–394 (ESGYEVGEVQ…VASMFWSFRA (153 aa)) lie on the Periplasmic side of the membrane. Heme b is bound at residue methionine 395. A helical transmembrane segment spans residues 395-414 (MVGAGFAMLILFVCAFWASA). The Cytoplasmic portion of the chain corresponds to 415–472 (RKNEESKPWLLKFALYSLPLPWIATQTGWFVAEHGRQPWTIGGVLPTHLSASSLSTGD). The chain crosses the membrane as a helical span at residues 473-492 (LWGSLIALIAFYTLLLVVEM). Residues 493 to 537 (YLMIRFARLGPSSLHTGRYHFEQLEQHAVKHASPSQADPQQPVNA) lie on the Periplasmic side of the membrane.

It belongs to the cytochrome ubiquinol oxidase subunit 1 family. In terms of assembly, heterodimer of subunits I and II. The cofactor is heme b. It depends on heme d cis-diol as a cofactor.

The protein resides in the cell inner membrane. The catalysed reaction is 2 a ubiquinol + O2(in) + 4 H(+)(in) = 2 a ubiquinone + 2 H2O(in) + 4 H(+)(out). May be involved in maintaining the low intracellular oxygen concentration required for nitrogen fixation. The chain is Cytochrome bd ubiquinol oxidase subunit 1 (cydA) from Azotobacter vinelandii.